The chain runs to 36 residues: Photosystem II reaction center protein M (36 aa).

A helical transmembrane segment spans residues 5–25; it reads ILAFIATALFILVPTAFLLII.

The protein belongs to the PsbM family. As to quaternary structure, PSII is composed of 1 copy each of membrane proteins PsbA, PsbB, PsbC, PsbD, PsbE, PsbF, PsbH, PsbI, PsbJ, PsbK, PsbL, PsbM, PsbT, PsbX, PsbY, PsbZ, Psb30/Ycf12, at least 3 peripheral proteins of the oxygen-evolving complex and a large number of cofactors. It forms dimeric complexes.

It is found in the plastid. Its subcellular location is the chloroplast thylakoid membrane. Functionally, one of the components of the core complex of photosystem II (PSII). PSII is a light-driven water:plastoquinone oxidoreductase that uses light energy to abstract electrons from H(2)O, generating O(2) and a proton gradient subsequently used for ATP formation. It consists of a core antenna complex that captures photons, and an electron transfer chain that converts photonic excitation into a charge separation. This subunit is found at the monomer-monomer interface. In Panax ginseng (Korean ginseng), this protein is Photosystem II reaction center protein M.